The primary structure comprises 326 residues: Tetraacyldisaccharide 4'-kinase (326 aa).

52–59 contacts ATP; the sequence is TLGGAGKT.

The protein belongs to the LpxK family.

It catalyses the reaction a lipid A disaccharide + ATP = a lipid IVA + ADP + H(+). The protein operates within glycolipid biosynthesis; lipid IV(A) biosynthesis; lipid IV(A) from (3R)-3-hydroxytetradecanoyl-[acyl-carrier-protein] and UDP-N-acetyl-alpha-D-glucosamine: step 6/6. In terms of biological role, transfers the gamma-phosphate of ATP to the 4'-position of a tetraacyldisaccharide 1-phosphate intermediate (termed DS-1-P) to form tetraacyldisaccharide 1,4'-bis-phosphate (lipid IVA). In Methylobacterium radiotolerans (strain ATCC 27329 / DSM 1819 / JCM 2831 / NBRC 15690 / NCIMB 10815 / 0-1), this protein is Tetraacyldisaccharide 4'-kinase.